We begin with the raw amino-acid sequence, 305 residues long: Peroxisome assembly protein 26 (305 aa).

A disordered region spans residues 1 to 25; the sequence is MKSDCSTSAAPFRGLGGPLRSSEPV. The Cytoplasmic segment spans residues 1–246; the sequence is MKSDCSTSAA…RQLWDSAVSH (246 aa). The chain crosses the membrane as a helical; Signal-anchor for type II membrane protein span at residues 247–267; that stretch reads FFSLPFKKSLLAALILCLLVV. Residues 268–305 lie on the Peroxisomal matrix side of the membrane; it reads RFDPASPSSLPSLYKLAQLFRWIRKAASSRLYQLRIRD.

This sequence belongs to the peroxin-26 family. As to quaternary structure, interacts (via its cytoplasmic domain) with PEX6; interaction is direct and is ATP-dependent. Interacts with PEX1; interaction is indirect and is mediated via interaction with PEX6.

Its subcellular location is the peroxisome membrane. In terms of biological role, peroxisomal docking factor that anchors PEX1 and PEX6 to peroxisome membranes. PEX26 is therefore required for the formation of the PEX1-PEX6 AAA ATPase complex, a complex that mediates the extraction of the PEX5 receptor from peroxisomal membrane. The polypeptide is Peroxisome assembly protein 26 (PEX26) (Macaca fascicularis (Crab-eating macaque)).